A 751-amino-acid polypeptide reads, in one-letter code: ATP-dependent DNA helicase Hel308 (751 aa).

ATP-binding positions include glutamine 20 and 39 to 46; that span reads IPTASGKT. Residues 26 to 196 enclose the Helicase ATP-binding domain; it reads EGLLDKSKNF…WLNAKLVTDE (171 aa). Residues 143-146 carry the DEAH box motif; the sequence is DEIH. The Helicase C-terminal domain occupies 235 to 435; that stretch reads NLTDLIVDSV…VLRVHILGLI (201 aa).

It belongs to the helicase family. Hel308 subfamily. As to quaternary structure, monomer.

The catalysed reaction is Couples ATP hydrolysis with the unwinding of duplex DNA by translocating in the 3'-5' direction.. The enzyme catalyses ATP + H2O = ADP + phosphate + H(+). Functionally, DNA-dependent ATPase and 3'-5' DNA helicase that may be involved in repair of stalled replication forks. The sequence is that of ATP-dependent DNA helicase Hel308 from Methanococcus vannielii (strain ATCC 35089 / DSM 1224 / JCM 13029 / OCM 148 / SB).